We begin with the raw amino-acid sequence, 486 residues long: Portal protein (486 aa).

The interval 456 to 486 (MVDADPTVPGSPSPTAPPKPQPAIESSGGDA) is disordered. A compositionally biased stretch (pro residues) spans 464–476 (PGSPSPTAPPKPQ).

The protein belongs to the SPP1-like portal protein family. Homododecamer.

It is found in the virion. In terms of biological role, forms the portal vertex of the capsid. This portal plays critical roles in head assembly, genome packaging, neck/tail attachment, and genome ejection. The portal protein multimerizes as a single ring-shaped homododecamer arranged around a central channel. Binds to the terminase subunits to form the packaging machine. In Mycobacterium phage L5 (Mycobacteriophage L5), this protein is Portal protein (14).